The primary structure comprises 171 residues: Ribosome maturation factor RimM (171 aa).

Positions 96-169 constitute a PRC barrel domain; that stretch reads EGEFFIADMI…KMIIDPIKGM (74 aa).

The protein belongs to the RimM family. In terms of assembly, binds ribosomal protein uS19.

It localises to the cytoplasm. Its function is as follows. An accessory protein needed during the final step in the assembly of 30S ribosomal subunit, possibly for assembly of the head region. Essential for efficient processing of 16S rRNA. May be needed both before and after RbfA during the maturation of 16S rRNA. It has affinity for free ribosomal 30S subunits but not for 70S ribosomes. This Clostridioides difficile (strain 630) (Peptoclostridium difficile) protein is Ribosome maturation factor RimM.